The sequence spans 723 residues: Probable inactive serine/threonine-protein kinase fnkD (723 aa).

In terms of domain architecture, Protein kinase spans 33 to 276 (WEIITQLESN…TTSLPKYSTL (244 aa)). FNIP repeat units lie at residues 301–342 (FNQP…ELAS), 343–384 (FNQT…LLSS), 385–426 (FNQP…SLAS), 524–565 (FNQS…ILPS), 566–606 (FNHP…LGDE), and 647–690 (FNIE…FGIT).

It belongs to the protein kinase superfamily. STE Ser/Thr protein kinase family.

In Dictyostelium discoideum (Social amoeba), this protein is Probable inactive serine/threonine-protein kinase fnkD (fnkD-1).